The following is a 200-amino-acid chain: Small ribosomal subunit protein mS26 (200 aa).

A mitochondrion-targeting transit peptide spans 1–27 (MLRALNRLAARPGGQPPTLLLLPVRGR). Lysine 159 is subject to N6-acetyllysine.

Belongs to the mitochondrion-specific ribosomal protein mS26 family. As to quaternary structure, component of the mitochondrial ribosome small subunit (28S) which comprises a 12S rRNA and about 30 distinct proteins.

It is found in the mitochondrion. This chain is Small ribosomal subunit protein mS26 (Mrps26), found in Rattus norvegicus (Rat).